Consider the following 286-residue polypeptide: Bifunctional protein FolD (286 aa).

NADP(+) contacts are provided by residues 165–167 (GRS), S190, and V231.

The protein belongs to the tetrahydrofolate dehydrogenase/cyclohydrolase family. In terms of assembly, homodimer.

It carries out the reaction (6R)-5,10-methylene-5,6,7,8-tetrahydrofolate + NADP(+) = (6R)-5,10-methenyltetrahydrofolate + NADPH. The enzyme catalyses (6R)-5,10-methenyltetrahydrofolate + H2O = (6R)-10-formyltetrahydrofolate + H(+). The protein operates within one-carbon metabolism; tetrahydrofolate interconversion. Its function is as follows. Catalyzes the oxidation of 5,10-methylenetetrahydrofolate to 5,10-methenyltetrahydrofolate and then the hydrolysis of 5,10-methenyltetrahydrofolate to 10-formyltetrahydrofolate. This Bacillus mycoides (strain KBAB4) (Bacillus weihenstephanensis) protein is Bifunctional protein FolD.